Reading from the N-terminus, the 205-residue chain is Probable ADP-ribosylation factor At2g15310 (205 aa).

Residue glycine 2 is the site of N-myristoyl glycine attachment. GTP contacts are provided by residues 24–31 (GLDGSGKT), 67–71 (DIGGQ), and 126–129 (NKQD).

The protein belongs to the small GTPase superfamily. Arf family.

The protein resides in the golgi apparatus. Its function is as follows. GTP-binding protein involved in protein trafficking; may modulate vesicle budding and uncoating within the Golgi apparatus. This Arabidopsis thaliana (Mouse-ear cress) protein is Probable ADP-ribosylation factor At2g15310.